The primary structure comprises 246 residues: Sensory transduction protein LytT (246 aa).

The 115-residue stretch at 3 to 117 folds into the Response regulatory domain; sequence KVLVVDDEML…RIVQTLKKYK (115 aa). Residues 142–246 enclose the HTH LytTR-type domain; the sequence is LALPIEESIV…AKELKKLLRI (105 aa).

Post-translationally, phosphorylated by LytS.

The protein localises to the cytoplasm. Functionally, member of the two-component regulatory system LytS/LytT that probably regulates genes involved in cell wall metabolism. This is Sensory transduction protein LytT (lytT) from Bacillus cereus (strain ATCC 14579 / DSM 31 / CCUG 7414 / JCM 2152 / NBRC 15305 / NCIMB 9373 / NCTC 2599 / NRRL B-3711).